A 592-amino-acid chain; its full sequence is Pyruvate decarboxylase 3 (592 aa).

Residues Asp-54 and His-141 each contribute to the substrate site. The tract at residues 419–501 is thiamine pyrophosphate binding; it reads DSWFNCQKLK…FLINNGGYTI (83 aa). The Mg(2+) site is built by Asp-469, Asn-496, and Gly-498. Glu-502 contacts substrate.

This sequence belongs to the TPP enzyme family. Homotetramer. A metal cation is required as a cofactor. Requires thiamine diphosphate as cofactor. Expressed at low levels in roots and shoots.

It catalyses the reaction a 2-oxocarboxylate + H(+) = an aldehyde + CO2. The chain is Pyruvate decarboxylase 3 (PDC3) from Arabidopsis thaliana (Mouse-ear cress).